A 95-amino-acid chain; its full sequence is Glutamyl-tRNA(Gln) amidotransferase subunit C (95 aa).

It belongs to the GatC family. As to quaternary structure, heterotrimer of A, B and C subunits.

The catalysed reaction is L-glutamyl-tRNA(Gln) + L-glutamine + ATP + H2O = L-glutaminyl-tRNA(Gln) + L-glutamate + ADP + phosphate + H(+). The enzyme catalyses L-aspartyl-tRNA(Asn) + L-glutamine + ATP + H2O = L-asparaginyl-tRNA(Asn) + L-glutamate + ADP + phosphate + 2 H(+). Allows the formation of correctly charged Asn-tRNA(Asn) or Gln-tRNA(Gln) through the transamidation of misacylated Asp-tRNA(Asn) or Glu-tRNA(Gln) in organisms which lack either or both of asparaginyl-tRNA or glutaminyl-tRNA synthetases. The reaction takes place in the presence of glutamine and ATP through an activated phospho-Asp-tRNA(Asn) or phospho-Glu-tRNA(Gln). The protein is Glutamyl-tRNA(Gln) amidotransferase subunit C of Rhizobium meliloti (strain 1021) (Ensifer meliloti).